The primary structure comprises 90 residues: UPF0237 protein MJ1558 (90 aa).

The 75-residue stretch at 5 to 79 (VVSVIGQDRT…EELGVQVIVQ (75 aa)) folds into the ACT domain.

Belongs to the UPF0237 family.

The polypeptide is UPF0237 protein MJ1558 (Methanocaldococcus jannaschii (strain ATCC 43067 / DSM 2661 / JAL-1 / JCM 10045 / NBRC 100440) (Methanococcus jannaschii)).